We begin with the raw amino-acid sequence, 719 residues long: 2'-5'-oligoadenylate synthase 2 (719 aa).

The N-myristoyl glycine moiety is linked to residue Gly2. 2 OAS domain regions span residues 11-335 (VPAQ…SWNV) and 343-683 (TPGH…WKVP). Lys378 carries the post-translational modification N6-acetyllysine. Ser396 contributes to the ATP binding site. 3 residues coordinate Mg(2+): Asp408, Asp410, and Asp481. Residues Arg544 and Lys547 each coordinate ATP.

The protein belongs to the 2-5A synthase family. Homodimer. Mg(2+) is required as a cofactor. In terms of processing, myristoylation is not essential for its activity. Post-translationally, glycosylated. Glycosylation is essential for its activity.

It localises to the cytoplasm. The protein resides in the perinuclear region. The catalysed reaction is 3 ATP = 5'-triphosphoadenylyl-(2'-&gt;5')-adenylyl-(2'-&gt;5')-adenosine + 2 diphosphate. Its activity is regulated as follows. Produced as a latent enzyme which is activated by double stranded RNA (dsRNA) generated during the course of viral infection. The dsRNA activator must be at least 15 nucleotides long, and no modification of the 2'-hydroxyl group is tolerated. ssRNA or dsDNA do not act as activators. Strongly inhibited by copper, iron and zinc ions. Partially inhibited by cobalt and nickel ions. Interferon-induced, dsRNA-activated antiviral enzyme which plays a critical role in cellular innate antiviral response. Activated by detection of double stranded RNA (dsRNA): polymerizes higher oligomers of 2'-5'-oligoadenylates (2-5A) from ATP which then bind to the inactive monomeric form of ribonuclease L (RNASEL) leading to its dimerization and subsequent activation. Activation of RNASEL leads to degradation of cellular as well as viral RNA, resulting in the inhibition of protein synthesis, thus terminating viral replication. Can mediate the antiviral effect via the classical RNASEL-dependent pathway or an alternative antiviral pathway independent of RNASEL. In addition, it may also play a role in other cellular processes such as apoptosis, cell growth, differentiation and gene regulation. May act as a negative regulator of lactation, stopping lactation in virally infected mammary gland lobules, thereby preventing transmission of viruses to neonates. Non-infected lobules would not be affected, allowing efficient pup feeding during infection. In Homo sapiens (Human), this protein is 2'-5'-oligoadenylate synthase 2.